A 113-amino-acid polypeptide reads, in one-letter code: Ribosome-associated factor Y (113 aa).

The residue at position 66 (lysine 66) is an N6-acetyllysine. The interval 91–113 (KGEARRAATSVKDANFVEEVEEE) is disordered.

The protein belongs to the HPF/YfiA ribosome-associated protein family. YfiA subfamily. In terms of assembly, associates mainly with 70S ribosomes.

Its function is as follows. During stationary phase, prevents 70S dimer formation, probably in order to regulate translation efficiency during transition between the exponential and the stationary phases. In addition, during environmental stress such as cold shock or excessive cell density at stationary phase, stabilizes the 70S ribosome against dissociation, inhibits translation initiation and increase translation accuracy. When normal growth conditions are restored, is quickly released from the ribosome. The protein is Ribosome-associated factor Y of Escherichia coli O157:H7.